Here is a 329-residue protein sequence, read N- to C-terminus: Beta-ketoacyl-[acyl-carrier-protein] synthase III (329 aa).

Catalysis depends on residues C113 and H255. Residues 256–260 (QANQR) are ACP-binding. N285 is an active-site residue.

The protein belongs to the thiolase-like superfamily. FabH family. In terms of assembly, homodimer.

It localises to the cytoplasm. It catalyses the reaction malonyl-[ACP] + acetyl-CoA + H(+) = 3-oxobutanoyl-[ACP] + CO2 + CoA. Its pathway is lipid metabolism; fatty acid biosynthesis. Functionally, catalyzes the condensation reaction of fatty acid synthesis by the addition to an acyl acceptor of two carbons from malonyl-ACP. Catalyzes the first condensation reaction which initiates fatty acid synthesis and may therefore play a role in governing the total rate of fatty acid production. Possesses both acetoacetyl-ACP synthase and acetyl transacylase activities. Its substrate specificity determines the biosynthesis of branched-chain and/or straight-chain of fatty acids. The chain is Beta-ketoacyl-[acyl-carrier-protein] synthase III from Chlorobium phaeovibrioides (strain DSM 265 / 1930) (Prosthecochloris vibrioformis (strain DSM 265)).